The following is a 395-amino-acid chain: Zinc-regulated GTPase metalloprotein activator 1F (395 aa).

Residues 1-22 (MLPAVGSVDEEEDPAEEDCPEL) form a disordered region. Over residues 8-20 (VDEEEDPAEEDCP) the composition is skewed to acidic residues. The short motif at 17–24 (EDCPELVP) is the psi-PxLVp motif element. 49 to 56 (GYLGAGKT) contacts GTP. Zn(2+) contacts are provided by C107, C109, and C110. The short motif at 107–110 (CLCC) is the CXCC motif element. GTP is bound by residues 110–114 (CSVKD) and 203–206 (NKTD). A CobW C-terminal domain is found at 274-377 (IVTITFDVPG…ILKQLFIATV (104 aa)).

Belongs to the SIMIBI class G3E GTPase family. ZNG1 subfamily.

Its subcellular location is the nucleus. It carries out the reaction GTP + H2O = GDP + phosphate + H(+). In terms of biological role, zinc chaperone that directly transfers zinc cofactor to target metalloproteins, thereby activating them. Catalyzes zinc insertion into the active site of methionine aminopeptidase METAP1, which function to cleave the initiator methionine from polypeptides during or after protein translation. Mechanistically, the N-terminal psi-PxLVp motif binds to the C6H2-type zinc finger of inactive form of METAP1. After formation of the docked complex, zinc is transferred from the CXCC motif in the GTPase domain of ZNG1F to the zinc binding site in the peptidase domain of METAP1 in a process requiring GTP hydrolysis. GTP/GDP exchange is required for release of active METAP1. This Homo sapiens (Human) protein is Zinc-regulated GTPase metalloprotein activator 1F.